The following is a 142-amino-acid chain: Transcriptional regulator MraZ (142 aa).

2 SpoVT-AbrB domains span residues 5–47 and 76–119; these read EYPY…PLPG and ASKA…NPQR.

Belongs to the MraZ family. Forms oligomers.

The protein resides in the cytoplasm. Its subcellular location is the nucleoid. The protein is Transcriptional regulator MraZ of Deinococcus radiodurans (strain ATCC 13939 / DSM 20539 / JCM 16871 / CCUG 27074 / LMG 4051 / NBRC 15346 / NCIMB 9279 / VKM B-1422 / R1).